Consider the following 80-residue polypeptide: MTNNYQKPNPDDRSDNVEKLQDMVQNTIENIEEAKESMEFATDEEKQRIQEKNARRNESIESFRSEIQDESAARENGYQS.

The segment covering 34 to 73 has biased composition (basic and acidic residues); sequence AKESMEFATDEEKQRIQEKNARRNESIESFRSEIQDESAA. Residues 34–80 form a disordered region; that stretch reads AKESMEFATDEEKQRIQEKNARRNESIESFRSEIQDESAARENGYQS.

This sequence belongs to the Tlp family.

The protein localises to the spore core. The chain is Small, acid-soluble spore protein Tlp from Bacillus velezensis (strain DSM 23117 / BGSC 10A6 / LMG 26770 / FZB42) (Bacillus amyloliquefaciens subsp. plantarum).